Here is a 46-residue protein sequence, read N- to C-terminus: Endochitinase 2 (46 aa).

It belongs to the glycosyl hydrolase 19 family. Chitinase class I subfamily.

It catalyses the reaction Random endo-hydrolysis of N-acetyl-beta-D-glucosaminide (1-&gt;4)-beta-linkages in chitin and chitodextrins.. Defense against chitin-containing fungal and bacterial pathogens. The chain is Endochitinase 2 from Arachis hypogaea (Peanut).